We begin with the raw amino-acid sequence, 509 residues long: ATP synthase subunit alpha, mitochondrial (509 aa).

171–178 serves as a coordination point for ATP; it reads GDRQTGKT.

Belongs to the ATPase alpha/beta chains family. F-type ATPases have 2 components, CF(1) - the catalytic core - and CF(0) - the membrane proton channel. CF(1) has five subunits: alpha(3), beta(3), gamma(1), delta(1), epsilon(1). CF(0) has three main subunits: a, b and c.

It is found in the mitochondrion. It localises to the mitochondrion inner membrane. Its function is as follows. Mitochondrial membrane ATP synthase (F(1)F(0) ATP synthase or Complex V) produces ATP from ADP in the presence of a proton gradient across the membrane which is generated by electron transport complexes of the respiratory chain. F-type ATPases consist of two structural domains, F(1) - containing the extramembraneous catalytic core, and F(0) - containing the membrane proton channel, linked together by a central stalk and a peripheral stalk. During catalysis, ATP synthesis in the catalytic domain of F(1) is coupled via a rotary mechanism of the central stalk subunits to proton translocation. Subunits alpha and beta form the catalytic core in F(1). Rotation of the central stalk against the surrounding alpha(3)beta(3) subunits leads to hydrolysis of ATP in three separate catalytic sites on the beta subunits. Subunit alpha does not bear the catalytic high-affinity ATP-binding sites. This is ATP synthase subunit alpha, mitochondrial (ATPA) from Triticum aestivum (Wheat).